The sequence spans 349 residues: Tetraacyldisaccharide 4'-kinase (349 aa).

58–65 (TAGGSGKT) serves as a coordination point for ATP.

This sequence belongs to the LpxK family.

The catalysed reaction is a lipid A disaccharide + ATP = a lipid IVA + ADP + H(+). The protein operates within glycolipid biosynthesis; lipid IV(A) biosynthesis; lipid IV(A) from (3R)-3-hydroxytetradecanoyl-[acyl-carrier-protein] and UDP-N-acetyl-alpha-D-glucosamine: step 6/6. In terms of biological role, transfers the gamma-phosphate of ATP to the 4'-position of a tetraacyldisaccharide 1-phosphate intermediate (termed DS-1-P) to form tetraacyldisaccharide 1,4'-bis-phosphate (lipid IVA). This is Tetraacyldisaccharide 4'-kinase from Shewanella amazonensis (strain ATCC BAA-1098 / SB2B).